A 306-amino-acid chain; its full sequence is Agmatinase (306 aa).

Positions 126, 149, 151, 153, 230, and 232 each coordinate Mn(2+).

This sequence belongs to the arginase family. Agmatinase subfamily. Requires Mn(2+) as cofactor.

It catalyses the reaction agmatine + H2O = urea + putrescine. It participates in amine and polyamine biosynthesis; putrescine biosynthesis via agmatine pathway; putrescine from agmatine: step 1/1. In terms of biological role, catalyzes the formation of putrescine from agmatine. This Serratia proteamaculans (strain 568) protein is Agmatinase.